The primary structure comprises 697 residues: Semaphorin-2A (697 aa).

The signal sequence occupies residues Met1–Ser20. In terms of domain architecture, Sema spans Val21 to Leu493. 2 N-linked (GlcNAc...) asparagine glycosylation sites follow: Asn63 and Asn66. Cysteines 87 and 98 form a disulfide. Asn132, Asn198, and Asn283 each carry an N-linked (GlcNAc...) asparagine glycan. 2 disulfides stabilise this stretch: Cys260–Cys367 and Cys284–Cys326. Asn369 is a glycosylation site (N-linked (GlcNAc...) asparagine). 2 disulfide bridges follow: Cys496–Cys512 and Cys506–Cys521. The Ig-like C2-type domain maps to Pro526 to Ala634. Residues Asn534, Asn629, and Asn679 are each glycosylated (N-linked (GlcNAc...) asparagine). Residues Cys618 and Cys654 are joined by a disulfide bond. The segment covering Gln673–Thr685 has biased composition (polar residues). The disordered stretch occupies residues Gln673–Ala697.

The protein belongs to the semaphorin family. As to expression, expressed in a gradient in the developing limb bud epithelium during Ti pioneer axon outgrowth.

The protein resides in the secreted. Functionally, acts as a chemorepulsive guidance molecule critical for axon fasciculation and for determining both the initial direction and subsequent pathfinding events of the Ti axon projection. The polypeptide is Semaphorin-2A (SEMA-2A) (Schistocerca gregaria (Desert locust)).